The sequence spans 792 residues: Lon protease (792 aa).

Residues 16-208 (LPILPLRETV…KVTYYLTREL (193 aa)) enclose the Lon N-terminal domain. 360–367 (GPPGVGKT) contacts ATP. The Lon proteolytic domain maps to 597-778 (KDEVGVATGL…DEVLNLALLE (182 aa)). Catalysis depends on residues Ser-684 and Lys-727.

Belongs to the peptidase S16 family. As to quaternary structure, homohexamer. Organized in a ring with a central cavity.

It localises to the cytoplasm. The catalysed reaction is Hydrolysis of proteins in presence of ATP.. Functionally, ATP-dependent serine protease that mediates the selective degradation of mutant and abnormal proteins as well as certain short-lived regulatory proteins. Required for cellular homeostasis and for survival from DNA damage and developmental changes induced by stress. Degrades polypeptides processively to yield small peptide fragments that are 5 to 10 amino acids long. Binds to DNA in a double-stranded, site-specific manner. The sequence is that of Lon protease from Dictyoglomus thermophilum (strain ATCC 35947 / DSM 3960 / H-6-12).